A 352-amino-acid chain; its full sequence is tRNA uridine(34) hydroxylase (352 aa).

A Rhodanese domain is found at 144-238; sequence SDPDVILIDT…YLEEVPASDS (95 aa). Cysteine 198 serves as the catalytic Cysteine persulfide intermediate.

This sequence belongs to the TrhO family.

The enzyme catalyses uridine(34) in tRNA + AH2 + O2 = 5-hydroxyuridine(34) in tRNA + A + H2O. Catalyzes oxygen-dependent 5-hydroxyuridine (ho5U) modification at position 34 in tRNAs. This chain is tRNA uridine(34) hydroxylase, found in Psychrobacter cryohalolentis (strain ATCC BAA-1226 / DSM 17306 / VKM B-2378 / K5).